The chain runs to 625 residues: MPSSKARDSPSVERRDRLTLAKLASYDDVATDALVDRAYFWTNTRKNRTKYIPVRGVHEDDVARILLHEVIVAKDSAQAEKQLLAMSGMKKYLAKLPNDREKEWFRRHLRKYIQMYLPDSPFEVTTTNRYTITEHEAAICARKFIKQGQEIKYLSGTLVPMTREEEQELDLKRKDFSIVMSSRRKTPSFFLGPARFANHDCNANGRLVTRGSEGMQVVATRDIYIGEEITVSYGDDYFGIDNCECLCLTCERAVRNGWAPHVDSEEGSSKASTPALNDEAISNDSLLSPRKRKHHLDSDSDISPSSTPRKRSKFTRQSSKLRSAVSLADFAPVGSGSDNPPPQAETSIVPETTGAASITNDTIVPASGSAVEVSQASATDCDSSPSLEADESHHSSTSTTPTSIGDVKIKVEDTVEASLTESASATHITLSITGQPHNDRHPPGTDNDMLSELSEITDNPQKPKRSRGSRWKHGVVPSVEEESHRVRVPGDYTKTSKLLAQAYDRWVDCHTCNVWFVQHNSYLTRRECPRCERHSMLYGFRWPKTDKEGSMDDEERVMDHRTVHRFLYPEEEARISRKDRGVSFGVTPTPELSEPRTETEDSEACDDRRNTRASRTRTRSLRMTM.

Residues 120 to 234 (SPFEVTTTNR…IGEEITVSYG (115 aa)) form the SET domain. Disordered regions lie at residues 260–348 (PHVD…ETSI), 368–405 (GSAV…TSIG), 432–451 (ITGQ…DMLS), 457–476 (TDNP…HGVV), and 582–625 (VSFG…RMTM). 2 stretches are compositionally biased toward polar residues: residues 269 to 286 (SKAS…NDSL) and 372 to 386 (EVSQ…SSPS). A compositionally biased stretch (basic residues) spans 462–473 (KPKRSRGSRWKH). A compositionally biased stretch (basic and acidic residues) spans 593-610 (SEPRTETEDSEACDDRRN). Residues 611-625 (TRASRTRTRSLRMTM) are compositionally biased toward basic residues.

Belongs to the class V-like SAM-binding methyltransferase superfamily. Histone-lysine methyltransferase family. Suvar4-20 subfamily.

The protein resides in the nucleus. It localises to the chromosome. It catalyses the reaction L-lysyl(20)-[histone H4] + 3 S-adenosyl-L-methionine = N(6),N(6),N(6)-trimethyl-L-lysyl(20)-[histone H4] + 3 S-adenosyl-L-homocysteine + 3 H(+). Histone methyltransferase that trimethylates 'Lys-20' of histone H4 to form H4K20me3. The protein is Histone-lysine N-methyltransferase set9 (set9) of Aspergillus oryzae (strain ATCC 42149 / RIB 40) (Yellow koji mold).